The sequence spans 72 residues: Late effector protein 1 (72 aa).

The first 22 residues, 1–22, serve as a signal peptide directing secretion; it reads MKCYLVVVVAALCTLVAQGSVG. An N-linked (GlcNAc...) asparagine glycan is attached at Asn66.

Belongs to the lep1 family. In terms of assembly, interacts at the cell wall with secreted rep1 repellent peptides.

The protein localises to the secreted. The protein resides in the cell wall. In terms of biological role, core effector contributing to spore formation and tumor formation at the host plant. Modulates surface hydrophobicity promoting cell-cell or cell-surface contacts. Lep1 and rep1 interact in aerial hyphae to form a strong hydrophobic layer. Plays a crucial role in hyphal aggregation that might be a prerequisite for strong proliferation of diploid cells and for induction of the morphological changes associated with spore formation. The polypeptide is Late effector protein 1 (Sporisorium reilianum (strain SRZ2) (Maize head smut fungus)).